A 214-amino-acid polypeptide reads, in one-letter code: Thymidylate kinase (214 aa).

10–17 (GGEGVGKT) serves as a coordination point for ATP.

This sequence belongs to the thymidylate kinase family.

It catalyses the reaction dTMP + ATP = dTDP + ADP. In terms of biological role, phosphorylation of dTMP to form dTDP in both de novo and salvage pathways of dTTP synthesis. This is Thymidylate kinase from Bartonella quintana (strain Toulouse) (Rochalimaea quintana).